Here is a 538-residue protein sequence, read N- to C-terminus: Thermosome subunit beta (538 aa).

Residues 518–538 are disordered; sequence SSGSSEEGMEEMGGMGGMPPM. Residues 528 to 538 show a composition bias toward gly residues; it reads EMGGMGGMPPM.

This sequence belongs to the TCP-1 chaperonin family. In terms of assembly, forms a Heterooligomeric complex of two stacked eight-membered rings.

Functionally, molecular chaperone; binds unfolded polypeptides in vitro, and has a weak ATPase activity. This Methanothermobacter thermautotrophicus (strain ATCC 29096 / DSM 1053 / JCM 10044 / NBRC 100330 / Delta H) (Methanobacterium thermoautotrophicum) protein is Thermosome subunit beta (thsB).